A 401-amino-acid chain; its full sequence is Tryptophan synthase beta chain (401 aa).

Lys91 is modified (N6-(pyridoxal phosphate)lysine).

The protein belongs to the TrpB family. As to quaternary structure, tetramer of two alpha and two beta chains. Pyridoxal 5'-phosphate serves as cofactor.

The enzyme catalyses (1S,2R)-1-C-(indol-3-yl)glycerol 3-phosphate + L-serine = D-glyceraldehyde 3-phosphate + L-tryptophan + H2O. Its pathway is amino-acid biosynthesis; L-tryptophan biosynthesis; L-tryptophan from chorismate: step 5/5. Functionally, the beta subunit is responsible for the synthesis of L-tryptophan from indole and L-serine. The chain is Tryptophan synthase beta chain from Lactococcus lactis subsp. cremoris (strain MG1363).